Here is a 687-residue protein sequence, read N- to C-terminus: Glycine--tRNA ligase beta subunit (687 aa).

This sequence belongs to the class-II aminoacyl-tRNA synthetase family. As to quaternary structure, tetramer of two alpha and two beta subunits.

The protein localises to the cytoplasm. It catalyses the reaction tRNA(Gly) + glycine + ATP = glycyl-tRNA(Gly) + AMP + diphosphate. The polypeptide is Glycine--tRNA ligase beta subunit (Neisseria meningitidis serogroup C (strain 053442)).